The chain runs to 189 residues: Batroxicidin (189 aa).

The N-terminal stretch at 1–22 (MQGFFWKTWLVVALCGTSSSLA) is a signal peptide. The propeptide occupies 23-155 (HRPLSYGEAL…DEEKDRPKRV (133 aa)). 2 disulfide bridges follow: Cys79–Cys90 and Cys101–Cys118. Acidic residues predominate over residues 125–148 (EEEEEDEEEQKAEVEKDEEKEDEE). The disordered stretch occupies residues 125 to 152 (EEEEEDEEEQKAEVEKDEEKEDEEKDRP).

It belongs to the cathelicidin family. As to expression, expressed by the venom gland.

The protein resides in the secreted. Its subcellular location is the target cell membrane. In terms of biological role, potent antimicrobial peptide against Gram-negative (MIC=0.25 ug/ml against E.coli ATCC 25922, MIC=1 ug/ml against P.aeruginosa) and Gram-positive bacteria (MIC=32 ug/ml against E.faecalis, MIC=32 ug/ml against S.aureus). Adopts an amphipathic alpha helical conformation, that may allow to partition into the target membrane. Low hemolytic activities have been observed on mammalian cells. In addition, when tested in vitro on the parasite Trypanosoma cruzi (responsible of the Chagas disease), is able to reduce the number of the three forms (epimastigote, trypomastigote and amastigote) by inducing cell death through necrosis. The sequence is that of Batroxicidin from Bothrops atrox (Barba amarilla).